Here is a 493-residue protein sequence, read N- to C-terminus: Cysteine--tRNA ligase (493 aa).

C29 lines the Zn(2+) pocket. The 'HIGH' region motif lies at 31–41 (VTVYDLCHLGH). Residues C213, H238, and E242 each contribute to the Zn(2+) site. Positions 270–274 (KMSKS) match the 'KMSKS' region motif. K273 is a binding site for ATP.

The protein belongs to the class-I aminoacyl-tRNA synthetase family. In terms of assembly, monomer. Zn(2+) serves as cofactor.

Its subcellular location is the cytoplasm. The enzyme catalyses tRNA(Cys) + L-cysteine + ATP = L-cysteinyl-tRNA(Cys) + AMP + diphosphate. The sequence is that of Cysteine--tRNA ligase from Parasynechococcus marenigrum (strain WH8102).